Here is a 4235-residue protein sequence, read N- to C-terminus: MSPMKQNESESHSVSEPIAIVGSAYRFPGGCNTPSKLWDLLQQPRDILKELDPERLNLRRYYHPDGETHGSTDVSNKAYTLEEDISRFDASFFGISPLEAASMDPQQRTLLEVVYESTETAGIPLDKLRGSLTSVHVGVMTTDWAQVQRRDPETMPQYTATGIASSIISNRISYIFDLKGASETIDTACSSSLVALHNAARALQSGDCEKAIVAGVNLILDPDPFIYESKLHMLSPDARSRMWDAAANGYARGEGAAAVVLKTLGHALRDGDRIEGVIRSTFVNSDGLSSGLTMPSSAAQTALIRQTYRKAGLDPVRDRPQFFECHGTGTRAGDPVEARAISDAFLPSHRTNGGGAATTVDDPLYVGSIKTVVGHLEGCAGLAGLVKVLLSLKHGIIPPNLWFDKLNPEIARYYGPLQIPTKAIPWPELAPGTPLRASVNSFGFGGTNAHAIIERYDASQSYCSQWRRDMTEEKTIARTQNNDDVEIPVPLVLTAKTGGALWRTVDAYAQHLRQHPKLRVANLSQFMHSRRSTHRVRASFSGASREELVENMANFVQAHAADAKSPASQNRIGYSPLLIDPKEVSGILGIFTGQGAQWPAMGRDMMHQSPLFRKTIADCESVLQALPLKDAPAWSLSEELKKDASTSRLGEAEISQPLCTAVQLALVNVLTASGVYFDAVVGHSSGEIAATYASGIINLKAAMQIAYYRGLYAKLARGQSDEAGGMMAAGLSMDDAVKLCRLPEFEGRIQVAASNAPQSVTLSGDKEAIKAAKAKLDADGVFARELKVDTAYHSHHMLPCAEPYLKALLACDIQVSAPTKTPGRKCMWSSSVRGDAELLRRDRNLDSLKGPYWVANMVQTVQFSRAIQSTIWHGGPFDLAVEVGPHPALKGPTEQTLKAVYGSAPLYTGVLSRGANDAVAFSTAIGNIWSHLGPAFVDITGYQSIFSGTCEGHGGSEAPFISDLPLYPWDHDEEYWRESRISRRYRTGKDESHELLGRRMPDDNEREIRWRNLLKVSELPWTQGHRVLGEVLLPGAAYISMAIEAGRRLALDQGREVSLLEVSDVDILRPVVVADNKEGTETLFTVRLLDEYASTGKKSDELMTASFSFYIYNSPASTSIVHTCEGRIAVHLGAKLGSEAAANSTPQLPPREPSVSNLQQLDCEKLYSVFETIGLEYSGAFRRIVSSSRCLGHATATASWPTADLNDCYLVHPAILDVAFQTIFVARAHPDSGQLSSALLPSRIERVRVVPSLAMGSKLQNNENFNAAIDSWALNQTASSLTGNINVYDADSERALIQVEGFEVRAVGEPDASKDRLLFYETVWGRDISIMGLSDPIRDETSDAMVQNLSEAIERVSLFYVRQLMGELSTADRRQANWYHTRMLAAFDHHLAKVHEETHLHLRPEWLADDWTVIQTIDEAYPDAVELQMLHAVGQNVADVIRGKKHLLEVLRVDNLLDRLYTEDKGMHMANLFLANALKEITFKFPRCKILEIGAGTGATTWAALSAIGEAFDTYTYTDLSVGFFENAVERFSAFRHRMVFRALDIEKDPASQSFDLNSYDIIIATNVLHATRNLGVTLGNVRSLLKPGGYLLLNEKTGPDSLRATFNFGGLEGWWLAEEKERQLSPLMSPDGWDAQLQKAQFSGVDHIVHDVQEDQQDKQQNSMIMSQAVDDTFYARLSPLSEMANLLPMNEPLLIIGGQTTATLKMIKEIQKLLPRQWRHKVRLIASVNHLEAEGVPAHSNVICLQELDRGLFTTAMTSKCLDALKTLFINTRNLLWVTNAQHSSSMTPRASMFRGITRVLDGEIPHIRTQVLGIEPRATSSATARNLLEAFLRLRSDDGRHAANVDEDGADGSSQQVLWLHEPEAELLSNGTMMIPRVKARKSLNDTYLASTRAISTTVDARCVSVQAVAGPAKMLLRPVEDFAVEHAISSQSTDSKVHIQVESTLHIPEALDGTCLYLVCGWTRTAETSVPVIALSTSNASIVAVESKAVAMIDEADVKPETLFRVFQHMAMQALDSAVGRHGQGQSTALIYGADEELAKLTSERFAVRESKVYFASTRTSAPGDWLKVQPLLSKFALSQMMPADVEVFIDCLGDTESFDACRTLESCLSTTSTVHRLDACLLSRMSQCSPDTLADAYSHAKTQSNAEFSWNGNVQTFTAAELAGKLSHSLMHSVYMTDWQEKDSILVTVPPLQTRGLFKSDRTYLMVGAAGGLGTSICRWMVRNGARHVVVTSRNPKADPEMLNEARRYGAAVKVVPMDACSKDCVQTVVDMIRDTMPPIAGVCNAAMVLRDKLFLDMNVDHMNNVLGPKMQGTEHLDSIFAQEPLDFFVLLSSSAAILNNTGQSNYHCANLYMDSLVTNRRSRGLAASIIHVGHVCDTGYVARLVDDSKVQMSLGTTRVMSVSETDVHHAFAEAVRGGQPDSRSGSHNIIMGIEPPTKPLDVAKRKPVWISDPRLGHMLPFSTLENQMVASEQAAASAADSLAQQVSEATTDEEAAAAALKGFATKLEGILLLPLGSIGEDSAGRPVTDLGIDSLVAVEIRTWFLKQLRVDVPVMKILGGSTVGQLSALAAKLARQDAKKRAQLEEASGNQPVALPPLNDKETGPSKKGKAQEFPETVQVVGTAAERTEPLVLEASDRGGSSTANFTTSSSVSELDDSLQESTLQSSENNGESTPSKSSNCNSDSGSDNQAPREISSNGFFTQPAATARPNVLREAPMSPAQSRIWFLSKHIAEPDAYNMVFHYRVRGPLSMVRLRHALQTVTNHHECLCMCFYASADNGQPMQGLLASSASQMTIVPGGEEQDLQRELRKLKTRVWSVESGQTLELVVVGPRPGTAAAEEEEFSLLFGYHHIVMDAISFSIFLADLDKAYRMLPLDKASAGSHLDLAAHQRQQEHAGAWKESLEFWQAEFETIPEMLPPLSVALPTLQRGAVGTHRVLRELAHEQGGDAAIKKTCKNLRVSPFNLHIAVLQVVIARLGSIEDVCVGIVDANRSDSRASRMVGCFVNMLPVRSRILPSATLADVARAASSKALAAFAHGQVPLDSILDKVKAPRPAGSTPLFQVALNYRPAAAIASKQSLGGECEMELLADDFKDAENPFEISVLVSEMPGGRIAVEVVCQKSRYTMQATEALLDAYLNVLAGFLSDTAQSVGDCVVHDQSKVEHALDLGKGAQKSFGWPRTLSERVMSICQQHSTKSAIKDGRNELSYAQLASKVNHTASALVNAGCSVGSRIAVLCNPSIDAIVAMLAILHIGGVYVPLDTSLPEARHQSLASNCTPSLIISHAATRERAHKLSAVISAPGHEPARELTLDDLSPDETGYMAPLNAEPNAPAILLYTSGSTGTPKGVLLTQANFGNHIALKTDILGLQRGECVLQQSSLGFDMSLVQVFCALANGGCLVIVPQDVRRDPMELTSLMAQHKVSLTIATPSEYLAWLQYGSDALAQATSWKHLCMGGEPIPQLLKDELRRRLERKDLVVVSNCYGPTETTAAISFQSIALDSQDSHEQLPGESELANYAVGKALPNYSIRIRDPAGGAWLPVNHTGEIVIGGAGVALGYLDMPEETRARFLQTPGEEDGMLLYRTGDKGRLLSDGTLLCFGRITGDNQVKLRGLRIELGEVEAALLQASQGLIHTAVVSRRGDVLVAHCARSHESSRETTGGGGEQQDAATAILRRVSELLPQYSVPAAIALLPSLPTNANGKLDRTAIAALPLSPQDEAAAATSPSNDNNNNNTPSGGGGEKMTVRQGELRLLWERVLPRDATTTTTTNSVRITPESDFFLRGGNSLLLMKLQAAIRESMGVRVSTKALYQASTLSGMARCVAEQRSDDDEAEEDIDWAAEVAVPPSMLAQIEKLQHSSASSSSSSSSSSAGSSSTQRPRKTSGLQILLTGATGFLGGQLLERLVQSPRVSTVHCVAVPVDEQSLLEPFLQQQADGTRRKVRCYIGNLAAPALGLTAADQTALSQTADVIVHAGSMGHCLNTYATLSAPNFASTRHLCALALSRSPPIPLAFASSNRVALLTGSTAPPPGSAAAFPPPPGAQGFTASKWASEAFLEKLTASMSDVSKTKTKTTTTVMPWRVSIHRPCALISDRAPNSDALNAILRYSTSMRCVPSLPEHRAEGYLDFGQVDKVVEEMVGDILGLADERPQEGPAVVYRHHSGGVKVPIHEFREHMESVYGGRFESVQLGQWIIRAVDAGMDPLISAYLETFLEGDASMVFPYMGEQAV.

The region spanning 15–455 (SEPIAIVGSA…GTNAHAIIER (441 aa)) is the Ketosynthase family 3 (KS3) domain. Residues cysteine 189, histidine 326, and histidine 375 each act as for beta-ketoacyl synthase activity in the active site. Residues 590–924 (IFTGQGAQWP…ANDAVAFSTA (335 aa)) form a malonyl-CoA:ACP transacylase (MAT) domain region. The segment at 993-1135 (HELLGRRMPD…GRIAVHLGAK (143 aa)) is N-terminal hotdog fold. A dehydratase (DH) domain region spans residues 993–1310 (HELLGRRMPD…GFEVRAVGEP (318 aa)). The region spanning 993-1313 (HELLGRRMPD…VRAVGEPDAS (321 aa)) is the PKS/mFAS DH domain. Histidine 1025 (proton acceptor; for dehydratase activity) is an active-site residue. The tract at residues 1158–1313 (LQQLDCEKLY…VRAVGEPDAS (156 aa)) is C-terminal hotdog fold. The active-site Proton donor; for dehydratase activity is aspartate 1217. A methyltransferase (MT) domain region spans residues 1459–1652 (RLYTEDKGMH…FSGVDHIVHD (194 aa)). The ketoreductase (KR) domain stretch occupies residues 2208–2381 (TYLMVGAAGG…AASIIHVGHV (174 aa)). Positions 2500-2580 (EAAAAALKGF…QLSALAAKLA (81 aa)) constitute a Carrier 1 domain. Serine 2540 bears the O-(pantetheine 4'-phosphoryl)serine mark. Positions 2587 to 2709 (RAQLEEASGN…EISSNGFFTQ (123 aa)) are disordered. Residues 2605–2619 (NDKETGPSKKGKAQE) show a composition bias toward basic and acidic residues. Composition is skewed to polar residues over residues 2645–2659 (GGSSTANFTTSSSVS) and 2666–2678 (QESTLQSSENNGE). The segment covering 2679–2695 (STPSKSSNCNSDSGSDN) has biased composition (low complexity). The interval 2720–3163 (REAPMSPAQS…TAQSVGDCVV (444 aa)) is condensation (C) domain. Positions 3197–3609 (CQQHSTKSAI…DGTLLCFGRI (413 aa)) are adenylation (A) (KR) domain. The segment at 3724-3750 (DEAAAATSPSNDNNNNNTPSGGGGEKM) is disordered. Low complexity predominate over residues 3726–3742 (AAAATSPSNDNNNNNTP). The Carrier 2 domain maps to 3748–3833 (EKMTVRQGEL…GMARCVAEQR (86 aa)). Serine 3793 bears the O-(pantetheine 4'-phosphoryl)serine mark. A disordered region spans residues 3860–3889 (EKLQHSSASSSSSSSSSSAGSSSTQRPRKT). Residues 3865–3882 (SSASSSSSSSSSSAGSSS) are compositionally biased toward low complexity. Residues 3896-4141 (LTGATGFLGG…LDFGQVDKVV (246 aa)) form a reductase (RED) domain region.

It in the C-terminal section; belongs to the NRP synthetase family.

It participates in secondary metabolite biosynthesis. In terms of biological role, hybrid PKS-NRPS synthetase; part of the gene cluster that mediates the biosynthesis of tenellin-type 2-pyridones, iron-chelating compounds involved in iron stress tolerance, competition with the natural competitor fungus Metarhizium robertsii and insect hosts infection. TenS catalyzes the assembly of the polyketide-amino acid backbone. Because tenS lacks a designated enoylreductase (ER) domain, the required activity is provided the enoyl reductase tenC. Upon formation of the polyketide backbone on the thiotemplate, the triketide is transferred to the NRPS module and linked to tyrosine to produce the pyrrolidine-2-dione intermediates, including pretellinin A, 11-hydropretellenin A, 12-hydropretellenin A, 13-hydropretellenin A, 14-hydropretellenin A, 12-oxopretellenin A and prototellinin D. The pathway begins with the assembly of the polyketide-amino acid backbone by the hybrid PKS-NRPS tenS with the help of the enoyl reductase tenC. These enzymes catalyze the synthesis of the pyrrolidine-2-dione intermediates pretellinin A, 11-hydropretellenin A, 12-hydropretellenin A, 13-hydropretellenin A, 14-hydropretellenin A, 12-oxopretellenin A and prototellinin D. The cytochrome P450 monooxygenase tenA then catalyzes an oxidative ring expansion of pretenellin A and 14-hydropretellenin A to form the 2-pyridone core, leading to pretenellin B and pyridovericin, respectively. The cytochrome P450 monooxygenase tenB is then required for the selective N-hydroxylation of the 2-pyridone nitrogen of yield tellinin and 15-hydroxytellenin (15-HT), respectively. The UDP-glucosyltransferase GT1 and the methyltransferase MT1, located outside the tenS gene cluster, contribute to the stepwise glycosylation and methylation of 15-HT to obtain the glycoside pyridovericin-N-O-(4-O-methyl-beta-D-glucopyranoside) (PMGP). Additional related compounds such as 1-O-methyl-15-HT, (8Z)-1-O-methyl-15-HT, and O-methyltenellin A are also produced but the enzymes involved in their biosynthesis have still to be determined. The protein is Tenellin synthetase of Beauveria bassiana (strain ARSEF 2860) (White muscardine disease fungus).